Consider the following 147-residue polypeptide: UPF0306 protein YpAngola_A4021 (147 aa).

Belongs to the UPF0306 family.

The polypeptide is UPF0306 protein YpAngola_A4021 (Yersinia pestis bv. Antiqua (strain Angola)).